The primary structure comprises 380 residues: NADPH quinone oxidoreductase (380 aa).

The transit peptide at 1 to 17 directs the protein to the mitochondrion; it reads MSSFLSKRFISTTQRAM.

This sequence belongs to the zinc-containing alcohol dehydrogenase family. Quinone oxidoreductase subfamily. As to quaternary structure, homodimer.

The protein resides in the mitochondrion. It carries out the reaction a quinone + NADH + H(+) = a quinol + NAD(+). The catalysed reaction is a quinone + NADPH + H(+) = a quinol + NADP(+). NADPH quinone oxidoreductase that efficiently reduces 1,4-benzoquinone, whereas no activities are found for menadiones and methoxyquinones. This chain is NADPH quinone oxidoreductase, found in Kluyveromyces marxianus (Yeast).